Reading from the N-terminus, the 3218-residue chain is Serine/threonine-protein kinase Smg1 (3218 aa).

Residues 32–78 (LNNNGNHGDSSNEGGGGNGSGRGGATGSGNIAGLGGSESMWSPGGGK) are disordered. Over residues 33-43 (NNNGNHGDSSN) the composition is skewed to low complexity. Residues 44-67 (EGGGGNGSGRGGATGSGNIAGLGG) show a composition bias toward gly residues. Phosphoserine is present on Ser-70. Positions 1289 to 1692 (DAAAAAREEG…IFPAVVGANR (404 aa)) constitute an FAT domain. Residues 1643–1678 (APWKVIIPQLFSRLNHHEPYVRKSVCDLLCRLAKSR) form an HEAT repeat. One can recognise a PI3K/PI4K catalytic domain in the interval 1897 to 2232 (VESSVCVLPT…LGVGDLKYHK (336 aa)). The G-loop stretch occupies residues 1903–1909 (VLPTKTK). The tract at residues 2101 to 2109 (GLGDRHLDN) is catalytic loop. Residues 2121-2145 (HIDYNVCFEKGRTLRIPEKVPFRLT) are activation loop. The FATC domain maps to 3186 to 3218 (QRSTVAEQVDYVIREACNPENLAVLYEGWTPWV).

Belongs to the PI3/PI4-kinase family. As to quaternary structure, component of a post-splicing multiprotein NMD complex. Mn(2+) is required as a cofactor.

The protein resides in the cytoplasm. It carries out the reaction L-seryl-[protein] + ATP = O-phospho-L-seryl-[protein] + ADP + H(+). It catalyses the reaction L-threonyl-[protein] + ATP = O-phospho-L-threonyl-[protein] + ADP + H(+). Functionally, serine/threonine protein kinase involved in mRNA surveillance. Recognizes the substrate consensus sequence [ST]-Q. Involved in nonsense-mediated decay (NMD) of mRNAs containing premature stop codons, probably by phosphorylating Upf1. In Drosophila melanogaster (Fruit fly), this protein is Serine/threonine-protein kinase Smg1 (nonC).